Consider the following 249-residue polypeptide: 2,3-bisphosphoglycerate-dependent phosphoglycerate mutase (249 aa).

Substrate-binding positions include 8 to 15 (RHGESTWN), 21 to 22 (TG), arginine 60, 87 to 90 (ERHY), lysine 98, 114 to 115 (RR), and 183 to 184 (GN). Catalysis depends on histidine 9, which acts as the Tele-phosphohistidine intermediate. The active-site Proton donor/acceptor is the glutamate 87.

This sequence belongs to the phosphoglycerate mutase family. BPG-dependent PGAM subfamily. Homodimer.

The enzyme catalyses (2R)-2-phosphoglycerate = (2R)-3-phosphoglycerate. Its pathway is carbohydrate degradation; glycolysis; pyruvate from D-glyceraldehyde 3-phosphate: step 3/5. In terms of biological role, catalyzes the interconversion of 2-phosphoglycerate and 3-phosphoglycerate. This is 2,3-bisphosphoglycerate-dependent phosphoglycerate mutase from Burkholderia mallei (strain NCTC 10247).